The following is a 795-amino-acid chain: Phenylalanine--tRNA ligase beta subunit (795 aa).

One can recognise a tRNA-binding domain in the interval 39–148; that stretch reads AAEFNGVVIG…LDAPLGTDLR (110 aa). Residues 401-476 form the B5 domain; sequence PKPAQILLRR…RIYGYNNIPN (76 aa). Mg(2+) contacts are provided by Asp-454, Asp-460, Glu-463, and Glu-464. Residues 701–794 enclose the FDX-ACB domain; that stretch reads SKFPANRRDI…LKTEFNASLR (94 aa).

This sequence belongs to the phenylalanyl-tRNA synthetase beta subunit family. Type 1 subfamily. In terms of assembly, tetramer of two alpha and two beta subunits. It depends on Mg(2+) as a cofactor.

Its subcellular location is the cytoplasm. The enzyme catalyses tRNA(Phe) + L-phenylalanine + ATP = L-phenylalanyl-tRNA(Phe) + AMP + diphosphate + H(+). The polypeptide is Phenylalanine--tRNA ligase beta subunit (Shewanella oneidensis (strain ATCC 700550 / JCM 31522 / CIP 106686 / LMG 19005 / NCIMB 14063 / MR-1)).